The primary structure comprises 304 residues: MTKQSLPDVAKETHSERFAPIDWVGMGAIELPVMLKQADGVYRIPARVDAKVSLDKKPSRGIHMSRLYLLSQELLTKSELSLGLLGTVTSEFLRTHEDLSTKALVQVQFEAPLVRKALKSNNQAWRSYPVITSAFNEEGQISYFVEVVVTYSSTCPASAALSRQLIQDGFKQNFSTDKPLDFDVVHSWLGTPQGIVATPHAQRSFARVKAEVGANYNYGDLIDIVEEALQTAVQGAVKREDEQEFALRNGQNLMFCEDAARRVKEALDAKADVLDYVAEFSHVESLHPHNAVSHISKGLKLRSF.

This sequence belongs to the GTP cyclohydrolase IV family.

The enzyme catalyses GTP + H2O = 7,8-dihydroneopterin 3'-triphosphate + formate + H(+). It participates in cofactor biosynthesis; 7,8-dihydroneopterin triphosphate biosynthesis; 7,8-dihydroneopterin triphosphate from GTP: step 1/1. Its function is as follows. Converts GTP to 7,8-dihydroneopterin triphosphate. In Bdellovibrio bacteriovorus (strain ATCC 15356 / DSM 50701 / NCIMB 9529 / HD100), this protein is GTP cyclohydrolase FolE2.